A 90-amino-acid polypeptide reads, in one-letter code: U7-theraphotoxin-Hhn1g (90 aa).

The first 19 residues, 1 to 19, serve as a signal peptide directing secretion; it reads MKTAIFTVVLALAVFAVLS. Residues 20-50 constitute a propeptide that is removed on maturation; the sequence is FGWEANEKALSEEFTELIHEKEAASETEARE. Intrachain disulfides connect C51–C65, C58–C70, and C64–C81.

The protein belongs to the neurotoxin 10 (Hwtx-1) family. 13 (Hntx-13) subfamily. Expressed by the venom gland.

The protein resides in the secreted. In terms of biological role, ion channel inhibitor. This is U7-theraphotoxin-Hhn1g from Cyriopagopus hainanus (Chinese bird spider).